Reading from the N-terminus, the 239-residue chain is tRNA (guanine-N(7)-)-methyltransferase (239 aa).

4 residues coordinate S-adenosyl-L-methionine: Glu69, Glu94, Asp121, and Asp144. Asp144 is an active-site residue. Lys148 lines the substrate pocket. An interaction with RNA region spans residues 150–155; it reads RHNKRR. Residues Asp180 and 217-220 contribute to the substrate site; that span reads TKFE.

Belongs to the class I-like SAM-binding methyltransferase superfamily. TrmB family. In terms of assembly, monomer.

The catalysed reaction is guanosine(46) in tRNA + S-adenosyl-L-methionine = N(7)-methylguanosine(46) in tRNA + S-adenosyl-L-homocysteine. The protein operates within tRNA modification; N(7)-methylguanine-tRNA biosynthesis. Catalyzes the formation of N(7)-methylguanine at position 46 (m7G46) in tRNA. The sequence is that of tRNA (guanine-N(7)-)-methyltransferase from Salmonella typhimurium (strain LT2 / SGSC1412 / ATCC 700720).